Here is a 279-residue protein sequence, read N- to C-terminus: Movement protein (279 aa).

The disordered stretch occupies residues 246–279; the sequence is SESEELNVESPPAAIGSSSASRSEAFRPQVVNGL. Low complexity predominate over residues 254-268; sequence ESPPAAIGSSSASRS.

Belongs to the cucumovirus movement protein family.

It localises to the host cell junction. The protein resides in the host plasmodesma. In terms of biological role, transports viral genome to neighboring plant cells directly through plasmosdesmata, without any budding. The movement protein allows efficient cell to cell propagation, by bypassing the host cell wall barrier. Acts by forming a tubular structure at the host plasmodesmata, enlarging it enough to allow free passage of virion capsids. In Cucumber mosaic virus (strain CS) (CMV), this protein is Movement protein.